The primary structure comprises 157 residues: Cyclic pyranopterin monophosphate synthase (157 aa).

Residues 74–76 and 112–113 each bind substrate; these read MCH and ME. The active site involves Asp-127.

It belongs to the MoaC family. As to quaternary structure, homohexamer; trimer of dimers.

It catalyses the reaction (8S)-3',8-cyclo-7,8-dihydroguanosine 5'-triphosphate = cyclic pyranopterin phosphate + diphosphate. The protein operates within cofactor biosynthesis; molybdopterin biosynthesis. Catalyzes the conversion of (8S)-3',8-cyclo-7,8-dihydroguanosine 5'-triphosphate to cyclic pyranopterin monophosphate (cPMP). The protein is Cyclic pyranopterin monophosphate synthase of Syntrophomonas wolfei subsp. wolfei (strain DSM 2245B / Goettingen).